Here is a 416-residue protein sequence, read N- to C-terminus: Gamma-glutamyl phosphate reductase (416 aa).

Belongs to the gamma-glutamyl phosphate reductase family.

Its subcellular location is the cytoplasm. The catalysed reaction is L-glutamate 5-semialdehyde + phosphate + NADP(+) = L-glutamyl 5-phosphate + NADPH + H(+). It functions in the pathway amino-acid biosynthesis; L-proline biosynthesis; L-glutamate 5-semialdehyde from L-glutamate: step 2/2. In terms of biological role, catalyzes the NADPH-dependent reduction of L-glutamate 5-phosphate into L-glutamate 5-semialdehyde and phosphate. The product spontaneously undergoes cyclization to form 1-pyrroline-5-carboxylate. The protein is Gamma-glutamyl phosphate reductase of Salmonella arizonae (strain ATCC BAA-731 / CDC346-86 / RSK2980).